We begin with the raw amino-acid sequence, 178 residues long: MDFLNMSYQLIVAYLIQLGIYIGALAVIFFNNIVYAAISLALVLSLIALLYLFFDADFLAVTQILIYVGAINVLILFAIMLISLPKSSTFIFYFTKKSQISAFACISLFVLLVKIILQTPWSTQSSYILLNENNKLDQIGIYLLSNFLLPFELISLLLLIALIGAVSIARYQNTEETE.

The next 5 helical transmembrane spans lie at 10 to 30, 33 to 53, 64 to 84, 100 to 120, and 148 to 168; these read LIVA…VIFF, IVYA…LYLF, ILIY…LISL, ISAF…LQTP, and LLPF…AVSI.

It belongs to the complex I subunit 6 family. NDH is composed of at least 16 different subunits, 5 of which are encoded in the nucleus.

The protein resides in the plastid. Its subcellular location is the chloroplast thylakoid membrane. It catalyses the reaction a plastoquinone + NADH + (n+1) H(+)(in) = a plastoquinol + NAD(+) + n H(+)(out). It carries out the reaction a plastoquinone + NADPH + (n+1) H(+)(in) = a plastoquinol + NADP(+) + n H(+)(out). NDH shuttles electrons from NAD(P)H:plastoquinone, via FMN and iron-sulfur (Fe-S) centers, to quinones in the photosynthetic chain and possibly in a chloroplast respiratory chain. The immediate electron acceptor for the enzyme in this species is believed to be plastoquinone. Couples the redox reaction to proton translocation, and thus conserves the redox energy in a proton gradient. This is NAD(P)H-quinone oxidoreductase subunit 6, chloroplastic (ndhG) from Chara vulgaris (Common stonewort).